The chain runs to 860 residues: Eukaryotic translation initiation factor 3 subunit C (860 aa).

Residues 1–79 (MSSRFFHGGS…ESDEEEDRVT (79 aa)) form a disordered region. 2 stretches are compositionally biased toward acidic residues: residues 16–53 (SSDEEELYSDRDEEEVSDEEEETTSEEESSEEESDDEA) and 67–76 (DLDESDEEED). The PCI domain occupies 598 to 772 (FHMHINLELL…NAIVFRKGVE (175 aa)). The tract at residues 808–860 (AFQRDQGPGGRLGRGQGRGGQRTAGGRPPIGGQQRRPGGQQFSGGALGGAIKA) is disordered. Positions 814-830 (GPGGRLGRGQGRGGQRT) are enriched in gly residues. The segment covering 831–847 (AGGRPPIGGQQRRPGGQ) has biased composition (low complexity). Gly residues predominate over residues 848 to 860 (QFSGGALGGAIKA).

Belongs to the eIF-3 subunit C family. Component of the eukaryotic translation initiation factor 3 (eIF-3) complex.

Its subcellular location is the cytoplasm. Functionally, component of the eukaryotic translation initiation factor 3 (eIF-3) complex, which is involved in protein synthesis of a specialized repertoire of mRNAs and, together with other initiation factors, stimulates binding of mRNA and methionyl-tRNAi to the 40S ribosome. The eIF-3 complex specifically targets and initiates translation of a subset of mRNAs involved in cell proliferation. In Coccidioides immitis (strain RS) (Valley fever fungus), this protein is Eukaryotic translation initiation factor 3 subunit C.